We begin with the raw amino-acid sequence, 150 residues long: Large ribosomal subunit protein bL9 (150 aa).

Belongs to the bacterial ribosomal protein bL9 family.

In terms of biological role, binds to the 23S rRNA. This Shewanella baltica (strain OS155 / ATCC BAA-1091) protein is Large ribosomal subunit protein bL9.